Consider the following 837-residue polypeptide: Tuftelin-interacting protein 11 (837 aa).

Composition is skewed to basic and acidic residues over residues 1 to 13 and 44 to 64; these read MSLS…GEGH and QTKE…EERP. Disordered stretches follow at residues 1-21, 34-73, and 85-135; these read MSLS…DDER, EFNP…RARD, and LKKG…FAGG. The segment at 1–50 is required for interaction with DHX15; the sequence is MSLSHLYRDGEGHLDDDDDERENFEITDWDLQNEFNPNRQRHWQTKEEAT. 4 positions are modified to phosphoserine: serine 2, serine 59, serine 95, and serine 98. The segment covering 91 to 100 has biased composition (acidic residues); sequence EEADSEDSDA. The segment covering 101-116 has biased composition (basic and acidic residues); that stretch reads EEKPVKQEDFPKDLGP. A Phosphoserine modification is found at serine 144. The 47-residue stretch at 149–195 folds into the G-patch domain; it reads TKGIGQKLLQKMGYVPGRGLGKNAQGIINPIEAKQRKGKGAVGAYGS. The disordered stretch occupies residues 183–236; sequence QRKGKGAVGAYGSERTTQSLQDFPVADSEEEAEEEFQKELSQWRKDPSGSKKKP. The residue at position 210 (serine 210) is a Phosphoserine. A compositionally biased stretch (basic and acidic residues) spans 217-231; sequence EFQKELSQWRKDPSG. The Nuclear localization signal signature appears at 700-705; sequence VKDKFN. The tract at residues 710-734 is required for nuclear speckle localization; the sequence is IMNRAVSSNVGAYMQPGARENIAYL.

It belongs to the TFP11/STIP family. Identified in the spliceosome C complex. Found in the Intron Large (IL) complex, a post-mRNA release spliceosomal complex containing the excised intron, U2, U5 and U6 snRNPs, and splicing factors. Interacts with TUFT1. Interacts with DHX15; indicative for a recruitment of DHX15 to the IL complex. Interacts with GCFC2.

Its subcellular location is the cytoplasm. It is found in the nucleus. Functionally, involved in pre-mRNA splicing, specifically in spliceosome disassembly during late-stage splicing events. Intron turnover seems to proceed through reactions in two lariat-intron associated complexes termed Intron Large (IL) and Intron Small (IS). In cooperation with DHX15 seems to mediate the transition of the U2, U5 and U6 snRNP-containing IL complex to the snRNP-free IS complex leading to efficient debranching and turnover of excised introns. May play a role in the differentiation of ameloblasts and odontoblasts or in the forming of the enamel extracellular matrix. In Rattus norvegicus (Rat), this protein is Tuftelin-interacting protein 11 (Tfip11).